A 182-amino-acid polypeptide reads, in one-letter code: Translation initiation factor IF-3 (182 aa).

The segment at 1–22 is disordered; the sequence is MPLGDCNISTPDNKQNRKNQEI.

This sequence belongs to the IF-3 family. As to quaternary structure, monomer.

Its subcellular location is the cytoplasm. Functionally, IF-3 binds to the 30S ribosomal subunit and shifts the equilibrium between 70S ribosomes and their 50S and 30S subunits in favor of the free subunits, thus enhancing the availability of 30S subunits on which protein synthesis initiation begins. This chain is Translation initiation factor IF-3, found in Xanthomonas campestris pv. campestris (strain ATCC 33913 / DSM 3586 / NCPPB 528 / LMG 568 / P 25).